A 400-amino-acid polypeptide reads, in one-letter code: Subtilisin-like protease 11 (400 aa).

The signal sequence occupies residues 1–19; the sequence is MGLFKVIFTAVAALSAVDA. Residues 20 to 117 constitute a propeptide that is removed on maturation; it reads AELLSSAKSK…VEHDRHVYIS (98 aa). The Inhibitor I9 domain occupies 35–116; sequence SYLVVMKDSV…FVEHDRHVYI (82 aa). The 274-residue stretch at 127 to 400 folds into the Peptidase S8 domain; sequence SWGLGRVSHR…NKLLYNRSGK (274 aa). N138 is a glycosylation site (N-linked (GlcNAc...) asparagine). The active-site Charge relay system is D159. N-linked (GlcNAc...) asparagine glycosylation occurs at N181. The active-site Charge relay system is the H191. N252 and N337 each carry an N-linked (GlcNAc...) asparagine glycan. The active-site Charge relay system is S346. N-linked (GlcNAc...) asparagine glycosylation is found at N388 and N396.

Belongs to the peptidase S8 family.

It is found in the secreted. Functionally, secreted subtilisin-like serine protease with keratinolytic activity that contributes to pathogenicity. The polypeptide is Subtilisin-like protease 11 (SUB11) (Trichophyton verrucosum (strain HKI 0517)).